The sequence spans 315 residues: Kinetochore protein SPC25 homolog (315 aa).

Position 1 is an N-acetylmethionine (M1). Residues 57-91 adopt a coiled-coil conformation; sequence TAQSQVELMNLKADLREAEDELVKVLAVKTRKEAR. The interval 261 to 315 is disordered; it reads APAISFSTDTNMSTPENKRSKVQVNRRQKRGSESPLLAPVSTSATRRSSRFKGKK. Over residues 266–275 the composition is skewed to polar residues; it reads FSTDTNMSTP. Residues 280–289 show a composition bias toward basic residues; it reads SKVQVNRRQK.

This sequence belongs to the SPC25 family. As to quaternary structure, component of the NDC80 complex, which consists of NDC80, NUF2, SPC24 and SPC25.

It localises to the chromosome. It is found in the centromere. Acts as a component of the essential kinetochore-associated NDC80 complex, which is required for chromosome segregation and spindle checkpoint activity to ensure proper cell division. This chain is Kinetochore protein SPC25 homolog, found in Arabidopsis thaliana (Mouse-ear cress).